A 243-amino-acid chain; its full sequence is Phosphate-specific transport system accessory protein PhoU (243 aa).

This sequence belongs to the PhoU family. Homodimer.

The protein resides in the cytoplasm. Part of the phosphate (Pho) regulon, which plays a key role in phosphate homeostasis. Encoded together with proteins of the phosphate-specific transport (Pst) system in the polycistronic pstSCAB-phoU operon. PhoU is essential for the repression of the Pho regulon at high phosphate conditions. In this role, it may bind, possibly as a chaperone, to PhoR, PhoB or a PhoR-PhoB complex to promote dephosphorylation of phospho-PhoB, or inhibit formation of the PhoR-PhoB transitory complex. This Serratia marcescens protein is Phosphate-specific transport system accessory protein PhoU.